The primary structure comprises 336 residues: Alcohol dehydrogenase, propanol-preferring (336 aa).

Zn(2+)-binding residues include Cys37, His58, Cys89, Cys92, Cys95, Cys103, and Cys145.

Belongs to the zinc-containing alcohol dehydrogenase family. Requires Zn(2+) as cofactor.

The enzyme catalyses a primary alcohol + NAD(+) = an aldehyde + NADH + H(+). It catalyses the reaction a secondary alcohol + NAD(+) = a ketone + NADH + H(+). Functionally, preferred specificity is towards 1-propanol. The protein is Alcohol dehydrogenase, propanol-preferring (adhP) of Escherichia coli (strain K12).